Consider the following 930-residue polypeptide: F-box only protein 11 (930 aa).

Residues 1–150 (MNSVRAANRR…RVSGKSQDLS (150 aa)) are disordered. Residues 7-16 (ANRRPRRVSR) are compositionally biased toward basic residues. The span at 17 to 27 (PRPVQQQQQQP) shows a compositional bias: low complexity. Positions 28 to 73 (PQQPPPQPPQQQPPPQPPQQPPQQQPPPPPQQQPPPPPPPPPPPPQ) are enriched in pro residues. Polar residues predominate over residues 117 to 132 (PTKSSMEGASTSTTEN). One can recognise an F-box domain in the interval 156–202 (QYLQEKLPDEVVLKIFSYLLEQDLCRAACVCKRFSELANDPILWKRL). PbH1 repeat units follow at residues 398–420 (GACP…YITD), 421–443 (HAQG…WVKN), 444–466 (HGNP…FTFD), 467–489 (HGMG…EVKA), 490–512 (YANP…YVHE), 513–535 (KGRG…WITS), 536–558 (NSDP…YIFG), 559–581 (DGRG…QIRT), 582–604 (NSCP…YVHE), 605–627 (KGQG…WVTT), 628–650 (GSTP…YFYD), 651–673 (NGHG…QIRT), 674–696 (GSNP…LVYN), 697–719 (SGLG…WIKT), 720–742 (DSNP…CIFN), 743–765 (GGRG…LIST), 766–788 (NSHP…EITN), 789–811 (HATA…FLAS), and 812–833 (GVNV…EKAV). The UBR-type zinc-finger motif lies at 836–907 (GQCLYKISSY…LSNPCTLAGE (72 aa)).

In terms of assembly, component of the SCF(FBXO11) complex consisting of CUL1, RBX1, SKP1 and FBXO11. Interacts with CIITA. At 9.5 dpc and 10.5 dpc, expression is restricted to developing heart tissue. By 11.5 dpc and 12.5 dpc, detected in liver and subsequently in muscle by 13.5 dpc. At 14.5 dpc, still detected in heart, liver and muscle and also in the developing secondary palate including the nasal, medial and oral epithelia of the palatal shelves. At 15.5 dpc and 16.5 dpc, expressed in lung, kidney, heart, liver, muscle and adrenal gland. At this time, fusion of the palate shelves has occurred, with expression confined to the nasal and oral epithelia. At 17.5 dpc, expression in the lung is confined to bronchial epithelial cells and is evident in bone marrow, skin, tissue macrophages, osteoblasts, kidney, liver and spleen. At 18.5 dpc, expressed in bone marrow, liver, kidney and muscle but decreases in heart and lung. At this time, first detected in the middle ear epithelium. At the newborn stage, expression is strong in the middle ear where it is confined to mucin-secreting cells, as well as persisting in bone marrow, kidney and liver. Middle ear expression persists in postnatal head tissue at 4 and 13 days after birth and has declined by 21 days after birth. In the adult, expression is seen in alveolar macrophages of the lung, glomeruli and collecting tubules of the kidney, midbrain, heart and muscle.

It localises to the nucleus. The protein resides in the chromosome. Its pathway is protein modification; protein ubiquitination. Its function is as follows. Substrate recognition component of a SCF (SKP1-CUL1-F-box protein) E3 ubiquitin-protein ligase complex which mediates the ubiquitination and subsequent proteasomal degradation of target proteins, such as DTL/CDT2, BCL6, SNAI1 and PRDM1/BLIMP1. The SCF(FBXO11) complex mediates ubiquitination and degradation of BCL6, thereby playing a role in the germinal center B-cells terminal differentiation toward memory B-cells and plasma cells. The SCF(FBXO11) complex also mediates ubiquitination and degradation of DTL, an important step for the regulation of TGF-beta signaling, cell migration and the timing of the cell-cycle progression and exit. The SCF(FBXO11) complex also catalyzes ubiquitination and degradation of GSK3B-phosphorylated SNAI1. Binds to and neddylates phosphorylated p53/TP53, inhibiting its transcriptional activity. Plays a role in the regulatiom of erythropoiesis but not myelopoiesis or megakaryopoiesis. Mechanistically, activates erythroid genes by mediating the degradation of BAHD1, a heterochromatin-associated protein that recruits corepressors to H3K27me3 marks. Participates in macrophage cell death and inflammation in response to bacterial toxins by regulating the expression of complement 5a receptor 1/C5AR1 and IL-1beta. Acts as a critical regulator to determine the level of MHC-II by mediating the recognition of degron at the P/S/T domain of CIITA leading to its ubiquitination and subsequent degradation via the proteasome. Participates in the antiviral repsonse by initiating the activation of TBK1-IRF3-IFN-I axis. Mediates the 'Lys-63'-linked ubiquitination of TRAF3 to strengthen the interaction between TRAF3 and TBK1. This is F-box only protein 11 from Mus musculus (Mouse).